The following is a 153-amino-acid chain: Small ribosomal subunit protein bS16 (153 aa).

A compositionally biased stretch (basic and acidic residues) spans 121–131; it reads AEAAAKAKAEA. Residues 121–153 form a disordered region; the sequence is AEAAAKAKAEAEAAAAAEEAPAEEAAEEAPAED. A compositionally biased stretch (acidic residues) spans 140–153; it reads APAEEAAEEAPAED.

This sequence belongs to the bacterial ribosomal protein bS16 family.

This chain is Small ribosomal subunit protein bS16, found in Bifidobacterium longum (strain DJO10A).